Here is a 219-residue protein sequence, read N- to C-terminus: Mediator of RNA polymerase II transcription subunit 18 (219 aa).

This sequence belongs to the Mediator complex subunit 18 family. In terms of assembly, component of the Mediator complex. Interacts with YY1 to suppress disease susceptibility via the repression of genes glutaredoxins GRX480, GRXS13 and thioredoxin TRX-h5. Binds to ABI4 to regulate abscisic acid responses; recruited by ABI4 to ABI5 promoter in the presence of abscisic acid (ABA). Interacts with SUF4 to regulate flowering time; recruited by SUF4 to FLC promoter.

Its subcellular location is the nucleus. Functionally, component of the Mediator complex, a coactivator involved in the regulated transcription of nearly all RNA polymerase II-dependent genes. Mediator functions as a bridge to convey information from gene-specific regulatory proteins to the basal RNA polymerase II transcription machinery. The Mediator complex, having a compact conformation in its free form, is recruited to promoters by direct interactions with regulatory proteins and serves for the assembly of a functional pre-initiation complex with RNA polymerase II and the general transcription factors. Involved in the regulation of histone H3 lysine tri-methylation (H3K36me3). Associates with the promoter, coding and terminator regions of target genes suggesting its function in transcription initiation, elongation and termination. Multifunctional protein which regulates plant immunity, especially during necrotrophic fungal infection (e.g. B.cinerea and A.brassicicola), flowering time and responses to hormones (e.g. abscisic acid ABA and ethylene) through interactions with distinct transcription factors. The sequence is that of Mediator of RNA polymerase II transcription subunit 18 from Arabidopsis thaliana (Mouse-ear cress).